Reading from the N-terminus, the 160-residue chain is Phosphopantetheine adenylyltransferase (160 aa).

Substrate is bound at residue serine 8. ATP contacts are provided by residues 8–9 (SF) and histidine 16. Substrate is bound by residues lysine 40, leucine 74, and lysine 88. Residues 89–91 (GLR), glutamate 99, and 124–130 (YSFVSST) contribute to the ATP site.

Belongs to the bacterial CoaD family. In terms of assembly, homohexamer. It depends on Mg(2+) as a cofactor.

It localises to the cytoplasm. It carries out the reaction (R)-4'-phosphopantetheine + ATP + H(+) = 3'-dephospho-CoA + diphosphate. It functions in the pathway cofactor biosynthesis; coenzyme A biosynthesis; CoA from (R)-pantothenate: step 4/5. Functionally, reversibly transfers an adenylyl group from ATP to 4'-phosphopantetheine, yielding dephospho-CoA (dPCoA) and pyrophosphate. This Thermus thermophilus (strain ATCC BAA-163 / DSM 7039 / HB27) protein is Phosphopantetheine adenylyltransferase.